A 71-amino-acid chain; its full sequence is MPSVKVRDTEPFDVALRRFKRACEKAGVLTESRKREFYEKPTWARKRMKAAAVKRLAKRLSRENRRTTRMY.

This sequence belongs to the bacterial ribosomal protein bS21 family.

This chain is Small ribosomal subunit protein bS21, found in Hydrogenovibrio crunogenus (strain DSM 25203 / XCL-2) (Thiomicrospira crunogena).